Reading from the N-terminus, the 182-residue chain is ADP-ribosylation factor 3 (182 aa).

Gly2 carries the N-myristoyl glycine lipid modification. Residues 24 to 31 (GLDNAGKT), 67 to 71 (DLGGQ), and 126 to 129 (NKQD) contribute to the GTP site.

Belongs to the small GTPase superfamily. Arf family. Interacts with GRIP; but preferentially when bound to GTP.

It is found in the golgi apparatus. Its function is as follows. GTP-binding protein involved in protein trafficking; may modulate vesicle budding and uncoating within the Golgi apparatus. This Arabidopsis thaliana (Mouse-ear cress) protein is ADP-ribosylation factor 3 (ARF3).